The following is a 370-amino-acid chain: L-lactate oxidase (370 aa).

An FMN hydroxy acid dehydrogenase domain is found at 8 to 367; the sequence is DPDGMPVTLS…TPDLLTGFSG (360 aa). A pyruvate-binding site is contributed by Y34. Residues 87–89, S116, and Q136 each bind FMN; that span reads PMA. Y138 contributes to the pyruvate binding site. Residue T164 participates in FMN binding. Position 173 (R173) interacts with pyruvate. 2 residues coordinate FMN: K238 and S260. Residues H262 and R265 each coordinate pyruvate. H262 serves as the catalytic Proton acceptor. FMN is bound by residues 293–297 and R317; that span reads DGGIR.

This sequence belongs to the FMN-dependent alpha-hydroxy acid dehydrogenase family. As to quaternary structure, homotetramer. The cofactor is FMN.

It catalyses the reaction (S)-lactate + O2 = pyruvate + H2O2. The catalysed reaction is a (2S)-2-hydroxycarboxylate + O2 = a 2-oxocarboxylate + H2O2. The enzyme catalyses glycolate + O2 = glyoxylate + H2O2. It carries out the reaction 2-hydroxyoctadecanoate + O2 = 2-oxooctadecanoate + H2O2. Catalyzes the oxidation of (S)-lactate (L-lactate) to pyruvate, with a reduction of O2 to H2O2. Is also able to use glycolate and to a lesser extent 2-hydroxyoctadecanoate as substrate. This is L-lactate oxidase from Roseobacter sp. (strain GAI101).